Reading from the N-terminus, the 113-residue chain is Large ribosomal subunit protein uL22 (113 aa).

This sequence belongs to the universal ribosomal protein uL22 family. In terms of assembly, part of the 50S ribosomal subunit.

This protein binds specifically to 23S rRNA; its binding is stimulated by other ribosomal proteins, e.g. L4, L17, and L20. It is important during the early stages of 50S assembly. It makes multiple contacts with different domains of the 23S rRNA in the assembled 50S subunit and ribosome. In terms of biological role, the globular domain of the protein is located near the polypeptide exit tunnel on the outside of the subunit, while an extended beta-hairpin is found that lines the wall of the exit tunnel in the center of the 70S ribosome. In Mycoplasmopsis synoviae (strain 53) (Mycoplasma synoviae), this protein is Large ribosomal subunit protein uL22.